The following is a 358-amino-acid chain: Trans-enoyl reductase milB (358 aa).

NADP(+) contacts are provided by residues 48 to 51 (VDTK), 170 to 173 (ATAT), 193 to 196 (SAKH), Y211, 258 to 259 (LD), and 349 to 350 (VR).

Belongs to the zinc-containing alcohol dehydrogenase family. In terms of assembly, monomer.

The catalysed reaction is 10 malonyl-CoA + acetyl-CoA + 3 AH2 + 8 NADPH + 18 H(+) = cordypyrone A + 3 A + 10 CO2 + 8 NADP(+) + 11 CoA + 8 H2O. It functions in the pathway secondary metabolite biosynthesis. Its function is as follows. Trans-enoyl reductase; part of the gene cluster that mediates the biosynthesis of cordypyrones A and B, 2 pyrones that show modest activities against pathogenic bacteria including methicillin-resistant Staphylococcus aureus (MRSA), Mycobacterium tuberculosis and Bacillus cereus. The HR-PKS milA catalyzes the formation of cordypyrones A via condensation of one acetate with 10 malonate units. Since milA lacks an enoyl reductase domain, the 2 beta-keto processing domains DH and KR of milA collaborate with the trans-enoyl reductase milB to catalyze the different levels of reduction. The cytochrome P450 monooxygenase milC then hydroxylates the C-22 of cordypyrones A to yield cordypyrones B. In Cordyceps militaris (strain CM01) (Caterpillar fungus), this protein is Trans-enoyl reductase milB.